Reading from the N-terminus, the 272-residue chain is Dermonecrotic toxin LvSicTox-alphaIC1aiii (272 aa).

His-4 is a catalytic residue. Residues Glu-24 and Asp-26 each coordinate Mg(2+). The active-site Nucleophile is His-40. 2 cysteine pairs are disulfide-bonded: Cys-44-Cys-50 and Cys-46-Cys-189. Asp-84 provides a ligand contact to Mg(2+).

This sequence belongs to the arthropod phospholipase D family. Class II subfamily. The cofactor is Mg(2+). In terms of tissue distribution, expressed by the venom gland.

It is found in the secreted. The catalysed reaction is an N-(acyl)-sphingosylphosphocholine = an N-(acyl)-sphingosyl-1,3-cyclic phosphate + choline. It catalyses the reaction an N-(acyl)-sphingosylphosphoethanolamine = an N-(acyl)-sphingosyl-1,3-cyclic phosphate + ethanolamine. It carries out the reaction a 1-acyl-sn-glycero-3-phosphocholine = a 1-acyl-sn-glycero-2,3-cyclic phosphate + choline. The enzyme catalyses a 1-acyl-sn-glycero-3-phosphoethanolamine = a 1-acyl-sn-glycero-2,3-cyclic phosphate + ethanolamine. Functionally, dermonecrotic toxins cleave the phosphodiester linkage between the phosphate and headgroup of certain phospholipids (sphingolipid and lysolipid substrates), forming an alcohol (often choline) and a cyclic phosphate. This toxin acts on sphingomyelin (SM). It may also act on ceramide phosphoethanolamine (CPE), lysophosphatidylcholine (LPC) and lysophosphatidylethanolamine (LPE), but not on lysophosphatidylserine (LPS), and lysophosphatidylglycerol (LPG). It acts by transphosphatidylation, releasing exclusively cyclic phosphate products as second products. Induces dermonecrosis, hemolysis, increased vascular permeability, edema, inflammatory response, and platelet aggregation. In Loxosceles variegata (Recluse spider), this protein is Dermonecrotic toxin LvSicTox-alphaIC1aiii.